A 424-amino-acid chain; its full sequence is SWI/SNF and RSC complexes subunit arp42 (424 aa).

The protein belongs to the actin family. In terms of assembly, component of the RSC complex composed of at least arp9, arp42, rsc1, rsc4, rsc7, rsc9, rsc58, sfh1, snf21, ssr1, ssr2, ssr3 and ssr4. The complex interacts with histone and histone variant components of centromeric chromatin. Component of the SWI/SNF global transcription activator complex composed of at least arp9, arp42, snf5, snf22, snf30, sbf59, sol1, ssr1, ssr2, ssr3, ssr4 and tfg3.

It localises to the cytoplasm. It is found in the nucleus. In terms of biological role, component of the chromatin structure remodeling complex (RSC), which is involved in transcription regulation and nucleosome positioning. Controls particularly membrane and organelle development genes. Part of the SWI/SNF complex, an ATP-dependent chromatin remodeling complex, required for the positive and negative regulation of gene expression of a large number of genes. It changes chromatin structure by altering DNA-histone contacts within a nucleosome, leading eventually to a change in nucleosome position, thus facilitating or repressing binding of gene-specific transcription factors. The sequence is that of SWI/SNF and RSC complexes subunit arp42 (arp42) from Schizosaccharomyces pombe (strain 972 / ATCC 24843) (Fission yeast).